The sequence spans 152 residues: Ubiquitin-conjugating enzyme E2 2 (152 aa).

The region spanning 4-150 is the UBC core domain; that stretch reads PARKRLMRDF…VREVVEQSWT (147 aa). Cys88 serves as the catalytic Glycyl thioester intermediate.

This sequence belongs to the ubiquitin-conjugating enzyme family.

It carries out the reaction S-ubiquitinyl-[E1 ubiquitin-activating enzyme]-L-cysteine + [E2 ubiquitin-conjugating enzyme]-L-cysteine = [E1 ubiquitin-activating enzyme]-L-cysteine + S-ubiquitinyl-[E2 ubiquitin-conjugating enzyme]-L-cysteine.. Its pathway is protein modification; protein ubiquitination. In terms of biological role, catalyzes the covalent attachment of ubiquitin to other proteins. In Triticum aestivum (Wheat), this protein is Ubiquitin-conjugating enzyme E2 2 (UBC2).